The chain runs to 429 residues: Histidinol dehydrogenase (429 aa).

3 residues coordinate NAD(+): Tyr-130, Gln-191, and Asn-214. Substrate contacts are provided by Ser-237, Gln-259, and His-262. The Zn(2+) site is built by Gln-259 and His-262. Catalysis depends on proton acceptor residues Glu-327 and His-328. Positions 328, 361, 415, and 420 each coordinate substrate. Asp-361 lines the Zn(2+) pocket. Zn(2+) is bound at residue His-420.

Belongs to the histidinol dehydrogenase family. The cofactor is Zn(2+).

It catalyses the reaction L-histidinol + 2 NAD(+) + H2O = L-histidine + 2 NADH + 3 H(+). It participates in amino-acid biosynthesis; L-histidine biosynthesis; L-histidine from 5-phospho-alpha-D-ribose 1-diphosphate: step 9/9. In terms of biological role, catalyzes the sequential NAD-dependent oxidations of L-histidinol to L-histidinaldehyde and then to L-histidine. The polypeptide is Histidinol dehydrogenase (Nitrobacter winogradskyi (strain ATCC 25391 / DSM 10237 / CIP 104748 / NCIMB 11846 / Nb-255)).